Here is a 198-residue protein sequence, read N- to C-terminus: Putative Do-like 15 protein (198 aa).

The interval 48–198 (KIFSFSREPN…VFENDSPSDK (151 aa)) is serine protease. Active-site charge relay system residues include histidine 86 and serine 175.

It belongs to the peptidase S1B family.

The chain is Putative Do-like 15 protein (DEGP15) from Arabidopsis thaliana (Mouse-ear cress).